The following is a 186-amino-acid chain: Holliday junction branch migration complex subunit RuvA (186 aa).

Positions methionine 1–lysine 63 are domain I. Positions asparagine 64–serine 137 are domain II. Position 137 (serine 137) is a region of interest, flexible linker. A domain III region spans residues serine 137 to asparagine 186.

Belongs to the RuvA family. In terms of assembly, homotetramer. Forms an RuvA(8)-RuvB(12)-Holliday junction (HJ) complex. HJ DNA is sandwiched between 2 RuvA tetramers; dsDNA enters through RuvA and exits via RuvB. An RuvB hexamer assembles on each DNA strand where it exits the tetramer. Each RuvB hexamer is contacted by two RuvA subunits (via domain III) on 2 adjacent RuvB subunits; this complex drives branch migration. In the full resolvosome a probable DNA-RuvA(4)-RuvB(12)-RuvC(2) complex forms which resolves the HJ.

Its subcellular location is the cytoplasm. Functionally, the RuvA-RuvB-RuvC complex processes Holliday junction (HJ) DNA during genetic recombination and DNA repair, while the RuvA-RuvB complex plays an important role in the rescue of blocked DNA replication forks via replication fork reversal (RFR). RuvA specifically binds to HJ cruciform DNA, conferring on it an open structure. The RuvB hexamer acts as an ATP-dependent pump, pulling dsDNA into and through the RuvAB complex. HJ branch migration allows RuvC to scan DNA until it finds its consensus sequence, where it cleaves and resolves the cruciform DNA. The protein is Holliday junction branch migration complex subunit RuvA of Mycoplasma mycoides subsp. mycoides SC (strain CCUG 32753 / NCTC 10114 / PG1).